The following is a 287-amino-acid chain: Oxaloacetate decarboxylase (287 aa).

Position 50 (Ser-50) interacts with substrate. Asp-88 serves as a coordination point for Mg(2+). Substrate-binding residues include Arg-159 and His-235.

Belongs to the isocitrate lyase family. Oxaloacetate decarboxylase subfamily. In terms of assembly, homotetramer; dimer of dimers. Mg(2+) is required as a cofactor.

The catalysed reaction is oxaloacetate + H(+) = pyruvate + CO2. In terms of biological role, catalyzes the decarboxylation of oxaloacetate into pyruvate. Seems to play a role in maintaining cellular concentrations of bicarbonate and pyruvate. The sequence is that of Oxaloacetate decarboxylase from Pseudomonas aeruginosa (strain LESB58).